We begin with the raw amino-acid sequence, 1333 residues long: Protein grainyhead (1333 aa).

5 disordered regions span residues 52-93, 439-598, 617-655, 727-784, and 853-885; these read SLSP…DSPQ, LLGS…PGAR, QTSH…GPYI, RFAG…GGAT, and TAVH…DFGR. The span at 59-68 shows a compositional bias: gly residues; that stretch reads GSGGHSGGGN. Low complexity predominate over residues 445–488; the sequence is SSSATVSTTGVVSTTTISHHQQQQQQQQQQQQQQQQQHQQQQQH. The span at 520 to 532 shows a compositional bias: basic and acidic residues; that stretch reads IKREPEDLRKDPK. Low complexity-rich tracts occupy residues 533–546 and 567–596; these read NGNI…NGPG and PSTP…GSPG. Positions 626–642 are enriched in gly residues; it reads GAGGGAGPAGAAGGGGV. The span at 749–772 shows a compositional bias: low complexity; that stretch reads QQQQQQQQHQQQQQQQQHHQQQQH. Residues 853-877 show a composition bias toward polar residues; that stretch reads TAVHGSQNSPTTSLVDTSTNGSTRS. Positions 899 to 1125 constitute a Grh/CP2 DB domain; the sequence is TNVGFRYHLE…DFAKPPVLFS (227 aa).

The protein belongs to the grh/CP2 family. Grainyhead subfamily. As to expression, restricted, during embryogenesis, to tissues derived from ectoderm, predominantly the central nervous system (CNS) and the epidermis.

It localises to the nucleus. In terms of biological role, transcription factor that binds a CNS-specific regulatory element of the Dopa decarboxylase (Ddc) gene. Also interacts with sequences adjacent to other transcription units, including Ultrabithorax (Ubx) and engrailed (en). Activity in vivo may be required only at high levels transiently to activate the expression of Ddc in the CNS. This chain is Protein grainyhead (grh), found in Drosophila melanogaster (Fruit fly).